The primary structure comprises 211 residues: Large ribosomal subunit protein uL3 (211 aa).

It belongs to the universal ribosomal protein uL3 family. Part of the 50S ribosomal subunit. Forms a cluster with proteins L14 and L19.

Functionally, one of the primary rRNA binding proteins, it binds directly near the 3'-end of the 23S rRNA, where it nucleates assembly of the 50S subunit. In Akkermansia muciniphila (strain ATCC BAA-835 / DSM 22959 / JCM 33894 / BCRC 81048 / CCUG 64013 / CIP 107961 / Muc), this protein is Large ribosomal subunit protein uL3.